Here is a 121-residue protein sequence, read N- to C-terminus: Copper transport protein CCH (121 aa).

Ala2 is modified (N-acetylalanine). An HMA domain is found at 2–65 (AQTVVLKVGM…TVSKTGKKTS (64 aa)). Positions 13 and 16 each coordinate Cu cation. The tract at residues 70-121 (EAEAEPKAEADPKVETVTETKTEAETKTEAKVDAKADVEPKAAEAETKPSQV) is disordered. Over residues 73 to 121 (AEPKAEADPKVETVTETKTEAETKTEAKVDAKADVEPKAAEAETKPSQV) the composition is skewed to basic and acidic residues.

This sequence belongs to the ATX1 family. The cofactor is Cu cation. As to expression, expressed in phloem (at protein level).

Functionally, involved in copper homeostasis. Can complement the yeast mutants atx1 and sod1. The polypeptide is Copper transport protein CCH (CCH) (Arabidopsis thaliana (Mouse-ear cress)).